The chain runs to 134 residues: ATP synthase epsilon chain (134 aa).

It belongs to the ATPase epsilon chain family. As to quaternary structure, F-type ATPases have 2 components, CF(1) - the catalytic core - and CF(0) - the membrane proton channel. CF(1) has five subunits: alpha(3), beta(3), gamma(1), delta(1), epsilon(1). CF(0) has three main subunits: a, b and c.

Its subcellular location is the cell membrane. In terms of biological role, produces ATP from ADP in the presence of a proton gradient across the membrane. The polypeptide is ATP synthase epsilon chain (Staphylococcus saprophyticus subsp. saprophyticus (strain ATCC 15305 / DSM 20229 / NCIMB 8711 / NCTC 7292 / S-41)).